The chain runs to 252 residues: AA9 family lytic polysaccharide monooxygenase B (252 aa).

Positions 1-20 (MVSFTKTFFAIVACALGVQA) are cleaved as a signal peptide. Residues H21 and H106 each contribute to the Cu(2+) site. C72 and C198 are oxidised to a cystine. N-linked (GlcNAc...) asparagine glycosylation is present at N158. H184 and Q193 together coordinate O2. Y195 is a binding site for Cu(2+). N237 is a glycosylation site (N-linked (GlcNAc...) asparagine).

The protein belongs to the polysaccharide monooxygenase AA9 family. The cofactor is Cu(2+).

The protein localises to the secreted. The enzyme catalyses [(1-&gt;4)-beta-D-glucosyl]n+m + reduced acceptor + O2 = 4-dehydro-beta-D-glucosyl-[(1-&gt;4)-beta-D-glucosyl]n-1 + [(1-&gt;4)-beta-D-glucosyl]m + acceptor + H2O.. In terms of biological role, lytic polysaccharide monooxygenase (LPMO) that depolymerizes crystalline and amorphous polysaccharides via the oxidation of scissile alpha- or beta-(1-4)-glycosidic bonds, yielding C1 or C4 oxidation products. Catalysis by LPMOs requires the reduction of the active-site copper from Cu(II) to Cu(I) by a reducing agent and H(2)O(2) or O(2) as a cosubstrate. The synergistic activity of LPMO9B with xylanase Xyl10G or cellulase Cel5B shows efficient bioconversion rates of 56 and 174 percent in pretreated kenaf (Hibiscus cannabinus) and oak, respectively. This chain is AA9 family lytic polysaccharide monooxygenase B, found in Gloeophyllum trabeum (strain ATCC 11539 / FP-39264 / Madison 617) (Brown rot fungus).